The sequence spans 802 residues: Leucine--tRNA ligase (802 aa).

The 'HIGH' region motif lies at 40–51 (PYPSGAGLHVGH). The 'KMSKS' region motif lies at 576–580 (KMSKS). Position 579 (lysine 579) interacts with ATP.

The protein belongs to the class-I aminoacyl-tRNA synthetase family.

It is found in the cytoplasm. The catalysed reaction is tRNA(Leu) + L-leucine + ATP = L-leucyl-tRNA(Leu) + AMP + diphosphate. This chain is Leucine--tRNA ligase, found in Bacillus cereus (strain ATCC 14579 / DSM 31 / CCUG 7414 / JCM 2152 / NBRC 15305 / NCIMB 9373 / NCTC 2599 / NRRL B-3711).